The chain runs to 220 residues: MOB kinase activator-like 3 (220 aa).

The Zn(2+) site is built by Cys83, Cys88, His165, and His170.

The protein belongs to the MOB1/phocein family.

This chain is MOB kinase activator-like 3 (Mob3), found in Drosophila melanogaster (Fruit fly).